The following is a 236-amino-acid chain: Uridylate kinase (236 aa).

ATP is bound at residue 8-11 (KLSG). Positions 16–21 (GEQGYG) are involved in allosteric activation by GTP. The ATP site is built by Gly-51 and Arg-55. UMP contacts are provided by residues Asp-70 and 131–138 (TGNPYFST). Positions 159, 165, and 168 each coordinate ATP.

The protein belongs to the UMP kinase family. Homohexamer.

It is found in the cytoplasm. It carries out the reaction UMP + ATP = UDP + ADP. Its pathway is pyrimidine metabolism; CTP biosynthesis via de novo pathway; UDP from UMP (UMPK route): step 1/1. Its activity is regulated as follows. Allosterically activated by GTP. Inhibited by UTP. Catalyzes the reversible phosphorylation of UMP to UDP. This is Uridylate kinase from Shouchella clausii (strain KSM-K16) (Alkalihalobacillus clausii).